Reading from the N-terminus, the 97-residue chain is Conotoxin Cal6.1e (97 aa).

A signal peptide spans 1–22 (MKLTTVLIVAVLVLAACQFTVT). The tract at residues 23 to 49 (DNSGDDTENPSLRSAGENQNPDSTKTI) is disordered. Positions 23-60 (DNSGDDTENPSLRSAGENQNPDSTKTITARATRARTNM) are excised as a propeptide. Polar residues predominate over residues 31–45 (NPSLRSAGENQNPDS). Intrachain disulfides connect cysteine 71/cysteine 87, cysteine 78/cysteine 91, and cysteine 86/cysteine 96.

It belongs to the conotoxin O1 superfamily. In terms of tissue distribution, expressed by the venom duct.

The protein localises to the secreted. Probable neurotoxin with unknown target. Possibly targets ion channels. This is Conotoxin Cal6.1e from Californiconus californicus (California cone).